The chain runs to 309 residues: uncharacterized protein (309 aa).

Residues 17–254 enclose the Radical SAM core domain; it reads RYGQKVHKLT…AGEMIRHTPP (238 aa). 3 residues coordinate [4Fe-4S] cluster: C33, C45, and C48.

This sequence belongs to the radical SAM superfamily. Requires [4Fe-4S] cluster as cofactor.

This is an uncharacterized protein from Escherichia coli O157:H7.